Consider the following 280-residue polypeptide: Dermonecrotic toxin LgSicTox-alphaIC1 (280 aa).

Residue H12 is part of the active site. Positions 32 and 34 each coordinate Mg(2+). The active-site Nucleophile is the H48. Disulfide bonds link C52–C58 and C54–C197. Residue D92 participates in Mg(2+) binding.

It belongs to the arthropod phospholipase D family. Class II subfamily. The cofactor is Mg(2+). In terms of tissue distribution, expressed by the venom gland.

The protein resides in the secreted. The enzyme catalyses an N-(acyl)-sphingosylphosphocholine = an N-(acyl)-sphingosyl-1,3-cyclic phosphate + choline. The catalysed reaction is an N-(acyl)-sphingosylphosphoethanolamine = an N-(acyl)-sphingosyl-1,3-cyclic phosphate + ethanolamine. It carries out the reaction a 1-acyl-sn-glycero-3-phosphocholine = a 1-acyl-sn-glycero-2,3-cyclic phosphate + choline. It catalyses the reaction a 1-acyl-sn-glycero-3-phosphoethanolamine = a 1-acyl-sn-glycero-2,3-cyclic phosphate + ethanolamine. Its function is as follows. Dermonecrotic toxins cleave the phosphodiester linkage between the phosphate and headgroup of certain phospholipids (sphingolipid and lysolipid substrates), forming an alcohol (often choline) and a cyclic phosphate. This toxin acts on sphingomyelin (SM) with high activity. It may also act on ceramide phosphoethanolamine (CPE), lysophosphatidylcholine (LPC) and lysophosphatidylethanolamine (LPE), but not on lysophosphatidylserine (LPS), and lysophosphatidylglycerol (LPG). It acts by transphosphatidylation, releasing exclusively cyclic phosphate products as second products. Induces platelet aggregation in platelet rich plasma, but not in washed platelet, indicating that this activity is dependent on plasma components. Also induces hemolysis. In vivo, the recombinant protein evokes an intense inflammatory reaction and dermonecrosis, similar to those induced by L.gaucho total venom. Is a good immunogen, capable of inducing immunoprotection in test animals. Functionally, anionic antimicrobial peptide that shows antimicrobial activity against Gram-negative bacteria (MIC=1.15-4.6 uM) (tested on E.coli, P.aeruginosa, and E.cloacae), but not on Gram-negative bacteria (M.luteus, S.aureus, and B.subtilis), neither on fungi and yeasts (A.niger, C.albicans and C.krusei). Does not show hemolytic effects against human erythrocytes, and has no cytotoxic effects against human cervical carcinoma cells (HeLa). This is Dermonecrotic toxin LgSicTox-alphaIC1 from Loxosceles gaucho (Spider).